A 350-amino-acid chain; its full sequence is MNVPDRKKALEAAIAYIEKQFGAGSIMSLGKHSATHEISTIKTGALSLDLALGIGGVPKGRIVEIFGPESSGKTTLATHIVANAQKMGGVAAYIDAEHALDPGYASLIGANINDLMISQPDCGEDALSIAELLARSGAVDVIVIDSVAALVPKSELEGDIGDVHVGLQARMMSQALRKLTATLARSQTCAIFINQIREKIGVSFGNPETTTGGRALKFYSSIRMDIRRIGAIKGNESFDLGNRIKVKVAKNKLAPPFRTAEFDILFNEGISSAGCILDLAVEHNIVEKKGSWFNYQDRKLGQGREAVREELKKNKKLFDELEKRIYDISSASKVVAVEEKKEELKAQPVA.

67–74 (GPESSGKT) lines the ATP pocket.

This sequence belongs to the RecA family.

It localises to the cytoplasm. Functionally, can catalyze the hydrolysis of ATP in the presence of single-stranded DNA, the ATP-dependent uptake of single-stranded DNA by duplex DNA, and the ATP-dependent hybridization of homologous single-stranded DNAs. It interacts with LexA causing its activation and leading to its autocatalytic cleavage. This Chlamydia caviae (strain ATCC VR-813 / DSM 19441 / 03DC25 / GPIC) (Chlamydophila caviae) protein is Protein RecA.